Here is a 593-residue protein sequence, read N- to C-terminus: ABC transporter F family member 2 (593 aa).

The segment covering 1–10 (MAKKGGKNNK) has biased composition (basic residues). The disordered stretch occupies residues 1–25 (MAKKGGKNNKSKKEVTPPTSDVEDE). ABC transporter domains follow at residues 53–294 (VKIE…VNQM) and 364–583 (MHFD…RDLT). ATP is bound by residues 85 to 92 (GQNGCGKS) and 399 to 406 (GPNGAGKS).

The protein belongs to the ABC transporter superfamily. ABCF family. EF3 subfamily.

This Dictyostelium discoideum (Social amoeba) protein is ABC transporter F family member 2 (abcF2).